Here is a 941-residue protein sequence, read N- to C-terminus: 26S proteasome regulatory subunit RPN2 (941 aa).

10 PC repeats span residues 363–396 (SATA…SSRF), 400–437 (GSLY…EDVD), 442–476 (GASL…TSGE), 477–511 (AAAF…GNIT), 513–546 (GLSM…LIRY), 547–582 (GGAF…DVRR), 583–615 (AAVT…AHDR), 617–651 (GAAF…FVRQ), 652–689 (AAMI…KHQE), and 695–731 (GACV…VGLA). The interval 808–854 (KARAKKTKKEKDTNEDDKKKKEKDLKKEETKKDDAKKESEAEEDFNK) is disordered. Basic and acidic residues predominate over residues 816–854 (KEKDTNEDDKKKKEKDLKKEETKKDDAKKESEAEEDFNK).

Belongs to the proteasome subunit S1 family.

In terms of biological role, acts as a regulatory subunit of the 26S proteasome which is involved in the ATP-dependent degradation of ubiquitinated proteins. The sequence is that of 26S proteasome regulatory subunit RPN2 (RPN2) from Candida glabrata (strain ATCC 2001 / BCRC 20586 / JCM 3761 / NBRC 0622 / NRRL Y-65 / CBS 138) (Yeast).